The sequence spans 281 residues: MPTASLETTINGAFDARETITPATRGEVRDAVDQALGLLDKGEARVAERAADGKWQVNQWLKKAVLLSFRLNDMSVIPGGPGNAAWWDKVPSKFEGWDENRFRDAGFRAVPGAIVRRSAFIARNVVLMPSFVNLGAYVDESTMVDTWCTVGSCAQIGKRVHISGGAGIGGVLEPLQAGPVIIEDDCFIGARSEVAEGVIVRKGAVLSMGVFLGASTKIVDRTTGEIFMGEVPEYAVVVPGALPGKPLSNGQLGPSTACAVIVKRVDERTRSKTGINELLRD.

Substrate contacts are provided by arginine 108 and aspartate 145.

It belongs to the transferase hexapeptide repeat family. As to quaternary structure, homotrimer.

It is found in the cytoplasm. It catalyses the reaction (S)-2,3,4,5-tetrahydrodipicolinate + succinyl-CoA + H2O = (S)-2-succinylamino-6-oxoheptanedioate + CoA. Its pathway is amino-acid biosynthesis; L-lysine biosynthesis via DAP pathway; LL-2,6-diaminopimelate from (S)-tetrahydrodipicolinate (succinylase route): step 1/3. The chain is 2,3,4,5-tetrahydropyridine-2,6-dicarboxylate N-succinyltransferase from Nitrobacter winogradskyi (strain ATCC 25391 / DSM 10237 / CIP 104748 / NCIMB 11846 / Nb-255).